A 617-amino-acid chain; its full sequence is Zinc finger protein 613 (617 aa).

The KRAB domain maps to Leu8–Pro78. 12 consecutive C2H2-type zinc fingers follow at residues His204–His226, His232–His254, Tyr260–His282, Tyr288–His310, His316–His338, Tyr344–His366, Tyr372–His394, Tyr400–His422, Tyr428–His450, Phe456–His478, Tyr484–His506, and Tyr512–His535.

It belongs to the krueppel C2H2-type zinc-finger protein family.

The protein resides in the nucleus. May be involved in transcriptional regulation. This is Zinc finger protein 613 (ZNF613) from Homo sapiens (Human).